Reading from the N-terminus, the 599-residue chain is Elongation factor 4 (599 aa).

The tr-type G domain maps to 4 to 186; the sequence is EHIRNFSIIA…EIVKKIPPPQ (183 aa). Residues 16–21 and 133–136 contribute to the GTP site; these read DHGKST and NKID.

Belongs to the TRAFAC class translation factor GTPase superfamily. Classic translation factor GTPase family. LepA subfamily.

It localises to the cell inner membrane. It catalyses the reaction GTP + H2O = GDP + phosphate + H(+). Functionally, required for accurate and efficient protein synthesis under certain stress conditions. May act as a fidelity factor of the translation reaction, by catalyzing a one-codon backward translocation of tRNAs on improperly translocated ribosomes. Back-translocation proceeds from a post-translocation (POST) complex to a pre-translocation (PRE) complex, thus giving elongation factor G a second chance to translocate the tRNAs correctly. Binds to ribosomes in a GTP-dependent manner. This is Elongation factor 4 from Geobacter sp. (strain M21).